The following is a 545-amino-acid chain: Adenine deaminase (545 aa).

Belongs to the metallo-dependent hydrolases superfamily. Adenine deaminase family. The cofactor is Mn(2+).

The catalysed reaction is adenine + H2O + H(+) = hypoxanthine + NH4(+). The chain is Adenine deaminase from Parabacteroides distasonis (strain ATCC 8503 / DSM 20701 / CIP 104284 / JCM 5825 / NCTC 11152).